Reading from the N-terminus, the 220-residue chain is Adapter protein MecA (220 aa).

The protein belongs to the MecA family. In terms of assembly, homodimer.

In terms of biological role, enables the recognition and targeting of unfolded and aggregated proteins to the ClpC protease or to other proteins involved in proteolysis. This chain is Adapter protein MecA, found in Macrococcus caseolyticus (strain JCSC5402) (Macrococcoides caseolyticum).